A 615-amino-acid chain; its full sequence is Putative binding protein BRA0576/BS1330_II0571 (615 aa).

The signal sequence occupies residues 1 to 29 (MLNRFIAFFRSVFLIGLVATAFGALPARA).

Belongs to the bacterial solute-binding protein 5 family.

Its subcellular location is the periplasm. The chain is Putative binding protein BRA0576/BS1330_II0571 from Brucella suis biovar 1 (strain 1330).